Here is a 236-residue protein sequence, read N- to C-terminus: Ribose-5-phosphate isomerase A (236 aa).

Residues threonine 32–threonine 35, aspartate 87–aspartate 90, and lysine 100–glycine 103 each bind substrate. The Proton acceptor role is filled by glutamate 109. Lysine 127 is a substrate binding site.

It belongs to the ribose 5-phosphate isomerase family. As to quaternary structure, homodimer.

The catalysed reaction is aldehydo-D-ribose 5-phosphate = D-ribulose 5-phosphate. It functions in the pathway carbohydrate degradation; pentose phosphate pathway; D-ribose 5-phosphate from D-ribulose 5-phosphate (non-oxidative stage): step 1/1. Functionally, catalyzes the reversible conversion of ribose-5-phosphate to ribulose 5-phosphate. The chain is Ribose-5-phosphate isomerase A from Haloquadratum walsbyi (strain DSM 16790 / HBSQ001).